The chain runs to 826 residues: 1,4-alpha-glucan-branching enzyme 1, chloroplastic/amyloplastic (826 aa).

The N-terminal 58 residues, 1 to 58 (ATTTTTTHNSKNKQYLAKQKPVELTLGYQNPNGCKVCSFGSKGSIYQKVSSGFKGVSV), are a transit peptide targeting the chloroplast. Aspartate 409 (nucleophile) is an active-site residue. Residue glutamate 464 is the Proton donor of the active site. Residues 782–813 (DTDVARIPDVSMESEDSNLDRIEDNSEDAVDA) are disordered.

This sequence belongs to the glycosyl hydrolase 13 family. GlgB subfamily. In terms of assembly, monomer. In terms of tissue distribution, expressed in roots, leaves, stipules, pods and flowers.

The protein localises to the plastid. Its subcellular location is the chloroplast. It is found in the amyloplast. It carries out the reaction Transfers a segment of a (1-&gt;4)-alpha-D-glucan chain to a primary hydroxy group in a similar glucan chain.. It functions in the pathway glycan biosynthesis; starch biosynthesis. Its function is as follows. Catalyzes the formation of the alpha-1,6-glucosidic linkages in starch by scission of a 1,4-alpha-linked oligosaccharide from growing alpha-1,4-glucan chains and the subsequent attachment of the oligosaccharide to the alpha-1,6 position. May preferentially transfer long chains during branching. This Pisum sativum (Garden pea) protein is 1,4-alpha-glucan-branching enzyme 1, chloroplastic/amyloplastic (SBEII).